A 66-amino-acid chain; its full sequence is uncharacterized protein (66 aa).

Residues 11–31 (PFPLLGVWIIVIIIVAVIGLL) form a helical membrane-spanning segment.

The protein resides in the membrane. This is an uncharacterized protein from Chenopodium amaranticolor (Quinoa).